Consider the following 275-residue polypeptide: Large ribosomal subunit protein uL2 (275 aa).

The disordered stretch occupies residues 216–275 (GIRPQTRGSAMNPIDHPHGGGEGKTNSGRHPVTPWGMPTKGYKTRKKKASDKLIISKRKK). Residues 257–275 (YKTRKKKASDKLIISKRKK) show a composition bias toward basic residues.

Belongs to the universal ribosomal protein uL2 family. As to quaternary structure, part of the 50S ribosomal subunit. Forms a bridge to the 30S subunit in the 70S ribosome.

In terms of biological role, one of the primary rRNA binding proteins. Required for association of the 30S and 50S subunits to form the 70S ribosome, for tRNA binding and peptide bond formation. It has been suggested to have peptidyltransferase activity; this is somewhat controversial. Makes several contacts with the 16S rRNA in the 70S ribosome. The protein is Large ribosomal subunit protein uL2 of Aliarcobacter butzleri (strain RM4018) (Arcobacter butzleri).